Here is a 427-residue protein sequence, read N- to C-terminus: Tol-Pal system protein TolB (427 aa).

Residues 1–23 (MKLLKRLVSVFAIVLAVGSNAFA) form the signal peptide.

The protein belongs to the TolB family. In terms of assembly, the Tol-Pal system is composed of five core proteins: the inner membrane proteins TolA, TolQ and TolR, the periplasmic protein TolB and the outer membrane protein Pal. They form a network linking the inner and outer membranes and the peptidoglycan layer.

It is found in the periplasm. Functionally, part of the Tol-Pal system, which plays a role in outer membrane invagination during cell division and is important for maintaining outer membrane integrity. In Haemophilus influenzae (strain PittGG), this protein is Tol-Pal system protein TolB.